The primary structure comprises 294 residues: 4-hydroxy-tetrahydrodipicolinate synthase (294 aa).

T47 contributes to the pyruvate binding site. Y135 acts as the Proton donor/acceptor in catalysis. K163 acts as the Schiff-base intermediate with substrate in catalysis. T205 is a binding site for pyruvate.

The protein belongs to the DapA family. Homotetramer; dimer of dimers.

The protein resides in the cytoplasm. The enzyme catalyses L-aspartate 4-semialdehyde + pyruvate = (2S,4S)-4-hydroxy-2,3,4,5-tetrahydrodipicolinate + H2O + H(+). The protein operates within amino-acid biosynthesis; L-lysine biosynthesis via DAP pathway; (S)-tetrahydrodipicolinate from L-aspartate: step 3/4. Functionally, catalyzes the condensation of (S)-aspartate-beta-semialdehyde [(S)-ASA] and pyruvate to 4-hydroxy-tetrahydrodipicolinate (HTPA). In Rickettsia felis (strain ATCC VR-1525 / URRWXCal2) (Rickettsia azadi), this protein is 4-hydroxy-tetrahydrodipicolinate synthase.